The following is a 343-amino-acid chain: uncharacterized protein (343 aa).

The protein belongs to the histone deacetylase family.

In terms of biological role, putative deacetylase. This is an uncharacterized protein from Methanocaldococcus jannaschii (strain ATCC 43067 / DSM 2661 / JAL-1 / JCM 10045 / NBRC 100440) (Methanococcus jannaschii).